Consider the following 480-residue polypeptide: ATP synthase subunit beta (480 aa).

ATP is bound at residue 153–160 (GGAGVGKT).

Belongs to the ATPase alpha/beta chains family. F-type ATPases have 2 components, CF(1) - the catalytic core - and CF(0) - the membrane proton channel. CF(1) has five subunits: alpha(3), beta(3), gamma(1), delta(1), epsilon(1). CF(0) has three main subunits: a(1), b(2) and c(9-12). The alpha and beta chains form an alternating ring which encloses part of the gamma chain. CF(1) is attached to CF(0) by a central stalk formed by the gamma and epsilon chains, while a peripheral stalk is formed by the delta and b chains.

The protein resides in the cell membrane. The enzyme catalyses ATP + H2O + 4 H(+)(in) = ADP + phosphate + 5 H(+)(out). Functionally, produces ATP from ADP in the presence of a proton gradient across the membrane. The catalytic sites are hosted primarily by the beta subunits. This is ATP synthase subunit beta from Lactobacillus johnsonii (strain CNCM I-12250 / La1 / NCC 533).